The following is a 398-amino-acid chain: F-box/kelch-repeat protein At1g30090 (398 aa).

One can recognise an F-box domain in the interval 51 to 98 (EPLIPGLPDDVALNCLLRVPVQSHVSSKSVCKRWHLLFGTKETFFAKR). Kelch repeat units follow at residues 106 to 152 (PWLF…FRSV), 159 to 207 (TMFV…VIDG), 209 to 255 (IYAA…VLNG), 257 to 304 (LLVT…IYDR), and 305 to 346 (LFIV…AVNC).

The sequence is that of F-box/kelch-repeat protein At1g30090 from Arabidopsis thaliana (Mouse-ear cress).